Here is a 362-residue protein sequence, read N- to C-terminus: Chalcone synthase A (362 aa).

Cysteine 168 is an active-site residue.

The protein belongs to the thiolase-like superfamily. Chalcone/stilbene synthases family.

It carries out the reaction (E)-4-coumaroyl-CoA + 3 malonyl-CoA + 3 H(+) = 2',4,4',6'-tetrahydroxychalcone + 3 CO2 + 4 CoA. Its pathway is secondary metabolite biosynthesis; flavonoid biosynthesis. Its function is as follows. The primary product of this enzyme is 4,2',4',6'-tetrahydroxychalcone (also termed naringenin-chalcone or chalcone) which can under specific conditions spontaneously isomerize into naringenin. This is Chalcone synthase A (CHSA) from Ipomoea triloba (Trilobed morning glory).